A 561-amino-acid polypeptide reads, in one-letter code: Glucose-6-phosphate isomerase (561 aa).

Residues 171–172 (GS), 222–227 (SKTFTT), Gln366, Glu370, His401, and Lys525 contribute to the D-glucose 6-phosphate site. Catalysis depends on Glu370, which acts as the Proton donor. Catalysis depends on residues His401 and Lys525.

Belongs to the GPI family. In terms of assembly, homodimer.

The protein resides in the cytoplasm. It localises to the cytosol. It carries out the reaction alpha-D-glucose 6-phosphate = beta-D-fructose 6-phosphate. The protein operates within carbohydrate degradation; glycolysis; D-glyceraldehyde 3-phosphate and glycerone phosphate from D-glucose: step 2/4. Functionally, in the cytoplasm, catalyzes the conversion of glucose-6-phosphate to fructose-6-phosphate, the second step in glycolysis, and the reverse reaction during gluconeogenesis. In Neurospora crassa (strain ATCC 24698 / 74-OR23-1A / CBS 708.71 / DSM 1257 / FGSC 987), this protein is Glucose-6-phosphate isomerase (pgi-1).